Reading from the N-terminus, the 1017-residue chain is Ubiquitin-like modifier-activating enzyme 1 (1017 aa).

Tandem repeats lie at residues 26–163 (SHET…GQLF) and 419–571 (GKTL…QVVV). A 2 approximate repeats region spans residues 26–571 (SHETMKKITS…GTKGNTQVVV (546 aa)). ATP-binding positions include Ala438, Asp464, Arg475, Lys488, and 536–537 (DN). The active-site Glycyl thioester intermediate is Cys592. Residues 765–781 (IQTSENEPAPSSNTQQA) show a composition bias toward polar residues. Positions 765 to 788 (IQTSENEPAPSSNTQQAGGDAEDD) are disordered.

The protein belongs to the ubiquitin-activating E1 family. Monomer.

The catalysed reaction is ATP + ubiquitin + [E1 ubiquitin-activating enzyme]-L-cysteine = AMP + diphosphate + S-ubiquitinyl-[E1 ubiquitin-activating enzyme]-L-cysteine.. The protein operates within protein modification; protein ubiquitination. Its function is as follows. Catalyzes the first step in ubiquitin conjugation to mark cellular proteins for degradation through the ubiquitin-proteasome system. Activates ubiquitin by first adenylating its C-terminal glycine residue with ATP, and thereafter linking this residue to the side chain of a cysteine residue in E1, yielding a ubiquitin-E1 thioester and free AMP. This Dictyostelium discoideum (Social amoeba) protein is Ubiquitin-like modifier-activating enzyme 1 (uba1).